Here is a 237-residue protein sequence, read N- to C-terminus: Fibroblast growth factor 3 (237 aa).

Positions 1-21 are cleaved as a signal peptide; it reads MVIIWILLLSFISCGPQVSWA. Residue N83 is glycosylated (N-linked (GlcNAc...) asparagine).

Belongs to the heparin-binding growth factors family.

Its function is as follows. Plays an important role in the regulation of embryonic development, cell proliferation, and cell differentiation. The protein is Fibroblast growth factor 3 (fgf3) of Xenopus laevis (African clawed frog).